Reading from the N-terminus, the 160-residue chain is MIRYIILGLLTLASAHGTTQKVDFKEPACNVTFAAEANECTTLIKCTTEHEKLLIRHKNKIGKYAVYAIWQPGDTTEYNVTVFQGKSHKTFMYTFPFYEMCDITMYMSKQYKLWPPQNCVENTGTFCCTAMLITVLALVCTLLYIKYKSRRSFIEEKKMP.

The N-terminal stretch at 1–17 (MIRYIILGLLTLASAHG) is a signal peptide. The Lumenal segment spans residues 18–124 (TTQKVDFKEP…PPQNCVENTG (107 aa)). Intrachain disulfides connect Cys-29–Cys-46 and Cys-40–Cys-101. 2 N-linked (GlcNAc...) asparagine; by host glycosylation sites follow: Asn-30 and Asn-79. A helical membrane pass occupies residues 125–145 (TFCCTAMLITVLALVCTLLYI). The Cytoplasmic segment spans residues 146-160 (KYKSRRSFIEEKKMP). A Di-lysine motif motif is present at residues 157–160 (KKMP).

This sequence belongs to the adenoviridae E19 family. Both disulfide bonds are absolutely critical for the interaction with MHC antigens. In terms of processing, N-glycosylated; high-mannose.

It localises to the host endoplasmic reticulum membrane. Its function is as follows. Binds and retains class I heavy chains in the endoplasmic reticulum during the early period of virus infection, thereby impairing their transport to the cell surface. Also delays the expression of class I alleles that it cannot affect by direct retention. Binds transporters associated with antigen processing (TAP) and acts as a tapasin inhibitor, preventing class I/TAP association. In consequence, infected cells are masked for immune recognition by cytotoxic T-lymphocytes. This Homo sapiens (Human) protein is Early E3 18.5 kDa glycoprotein.